The primary structure comprises 1600 residues: A disintegrin and metalloproteinase with thrombospondin motifs 12 (1600 aa).

An N-terminal signal peptide occupies residues 1 to 25 (MPCARGSWLAKLSIVAQLINFGAFC). Positions 26–244 (HGRQTQPWPV…TLRSRSLSRR (219 aa)) are excised as a propeptide. Residue Asn105 is glycosylated (N-linked (GlcNAc...) asparagine). The Cysteine switch motif lies at 210-217 (PICGLKDS). Cys212 is a binding site for Zn(2+). The region spanning 250–460 (RWVETLVVAD…GRGFCLDDIP (211 aa)) is the Peptidase M12B domain. 11 cysteine pairs are disulfide-bonded: Cys326-Cys380, Cys355-Cys362, Cys374-Cys455, Cys413-Cys439, Cys482-Cys505, Cys493-Cys511, Cys500-Cys530, Cys524-Cys535, Cys558-Cys595, Cys562-Cys600, and Cys573-Cys585. Residue His396 coordinates Zn(2+). Glu397 is an active-site residue. Zn(2+) contacts are provided by His400 and His406. The Disintegrin domain occupies 469–548 (VIAPGVIYDV…GKKPESIPGG (80 aa)). TSP type-1 domains lie at 546–601 (PGGW…HPCR), 827–887 (KLLY…KDCP), 891–947 (WAGE…RDIL), and 948–1001 (CPSD…QQCP). Residues 705–831 (CQTVKKLFRQ…DNDVEKLLYF (127 aa)) form a spacer 1 region. A spacer 2 region spans residues 1001–1321 (PFSRRVLKPN…HLMKDHSPAY (321 aa)). Disordered regions lie at residues 1006–1140 (VLKP…LSSS) and 1158–1179 (PEVE…KDKS). A compositionally biased stretch (low complexity) spans 1038-1047 (PTPLSTPTVP). Positions 1048 to 1107 (ESMSTSTPTINSLGSTIASQEDANGMGWQNNSTQAEEGSHFPTSSGSTSQVPVTSWSLSI) are enriched in polar residues. Low complexity predominate over residues 1130–1140 (TTTSDSGLSSS). TSP type-1 domains lie at 1318 to 1371 (SPAY…RPCA), 1373 to 1428 (WRVG…CNLE), 1429 to 1477 (PCGE…NRHL), and 1478 to 1538 (CCHW…QACR). Residues 1541 to 1581 (ADLTCLKDRLSISFCQTLKSMRKCSVPSVRAQCCLSCPQAP) enclose the PLAC domain.

Interacts with COMP. Requires Zn(2+) as cofactor. In terms of processing, the precursor is cleaved by a furin endopeptidase. Post-translationally, subjected to an intracellular maturation process yielding a 120 kDa N-terminal fragment containing the metalloproteinase, disintegrin, one TSP type-1 and the Cys-rich domains and a 83 kDa C-terminal fragment containing the spacer 2 and four TSP type-1 domains. Glycosylated. Can be O-fucosylated by POFUT2 on a serine or a threonine residue found within the consensus sequence C1-X(2)-(S/T)-C2-G of the TSP type-1 repeat domains where C1 and C2 are the first and second cysteine residue of the repeat, respectively. Fucosylated repeats can then be further glycosylated by the addition of a beta-1,3-glucose residue by the glucosyltransferase, B3GALTL. Fucosylation mediates the efficient secretion of ADAMTS family members. Can also be C-glycosylated with one or two mannose molecules on tryptophan residues within the consensus sequence W-X-X-W of the TPRs, and N-glycosylated. These other glycosylations can also facilitate secretion.

Its subcellular location is the secreted. The protein localises to the extracellular space. The protein resides in the extracellular matrix. Inhibited by alpha-2 macroglobulin. Metalloprotease that plays a role in the degradation of COMP. Also cleaves alpha-2 macroglobulin and aggregan. Has anti-tumorigenic properties. The polypeptide is A disintegrin and metalloproteinase with thrombospondin motifs 12 (Adamts12) (Mus musculus (Mouse)).